The sequence spans 554 residues: Glutamine--tRNA ligase (554 aa).

The 'HIGH' region motif lies at 34–44 (PEPNGYLHIGH). ATP contacts are provided by residues 35-37 (EPN) and 41-47 (HIGHAKS). L-glutamine contacts are provided by aspartate 67 and tyrosine 212. Residues threonine 231, 261–262 (RL), and 269–271 (MSK) each bind ATP. The 'KMSKS' region signature appears at 268–272 (VMSKR). An interaction with tRNA region spans residues 317–324 (TKQDNTIE).

This sequence belongs to the class-I aminoacyl-tRNA synthetase family. In terms of assembly, monomer.

It is found in the cytoplasm. It carries out the reaction tRNA(Gln) + L-glutamine + ATP = L-glutaminyl-tRNA(Gln) + AMP + diphosphate. The sequence is that of Glutamine--tRNA ligase from Shigella dysenteriae serotype 1 (strain Sd197).